The sequence spans 490 residues: Putative alanine aminotransferase (490 aa).

Pyridoxal 5'-phosphate is bound by residues Ala157, Ser158, Tyr183, Asn239, and Ser308. Lys311 carries the post-translational modification N6-(pyridoxal phosphate)lysine. Arg320 serves as a coordination point for pyridoxal 5'-phosphate.

Belongs to the class-I pyridoxal-phosphate-dependent aminotransferase family. Alanine aminotransferase subfamily. In terms of assembly, homodimer. It depends on pyridoxal 5'-phosphate as a cofactor.

It is found in the cytoplasm. Its subcellular location is the mitochondrion. It catalyses the reaction L-alanine + 2-oxoglutarate = pyruvate + L-glutamate. The protein operates within amino-acid degradation; L-alanine degradation via transaminase pathway; pyruvate from L-alanine: step 1/1. Alanine aminotransferase involved in both alanine biosynthesis and utilization. The polypeptide is Putative alanine aminotransferase (alt1) (Schizosaccharomyces pombe (strain 972 / ATCC 24843) (Fission yeast)).